Reading from the N-terminus, the 494-residue chain is UPF0164 protein TP_0859/TP_0860 (494 aa).

Positions 1–44 (MVRRPCVSAAPVRVGGRLVFGFARVGSRGLCLGALLLSPRIVLA) are cleaved as a signal peptide.

This sequence belongs to the UPF0164 family.

This is UPF0164 protein TP_0859/TP_0860 from Treponema pallidum (strain Nichols).